Consider the following 379-residue polypeptide: Homoserine O-acetyltransferase (379 aa).

The 305-residue stretch at 52–356 (NVVMVLHALT…IRGHDGFLVE (305 aa)) folds into the AB hydrolase-1 domain. Ser-157 serves as the catalytic Nucleophile. Arg-227 is a substrate binding site. Residues Asp-320 and His-350 contribute to the active site. Asp-351 is a substrate binding site.

It belongs to the AB hydrolase superfamily. MetX family. As to quaternary structure, homodimer.

Its subcellular location is the cytoplasm. The catalysed reaction is L-homoserine + acetyl-CoA = O-acetyl-L-homoserine + CoA. It functions in the pathway amino-acid biosynthesis; L-methionine biosynthesis via de novo pathway; O-acetyl-L-homoserine from L-homoserine: step 1/1. Its function is as follows. Transfers an acetyl group from acetyl-CoA to L-homoserine, forming acetyl-L-homoserine. This is Homoserine O-acetyltransferase from Mycobacterium marinum (strain ATCC BAA-535 / M).